Consider the following 395-residue polypeptide: Zinc-regulated GTPase metalloprotein activator 1B (395 aa).

Positions 1–36 (MLPAVGSADEEEDPAEEDCPELVPMETTQSEEEEKS) are disordered. Residues 8-20 (ADEEEDPAEEDCP) are compositionally biased toward acidic residues. Residues 17–24 (EDCPELVP) carry the psi-PxLVp motif motif. 49–56 (GYLGAGKT) serves as a coordination point for GTP. The Zn(2+) site is built by Cys107, Cys109, and Cys110. Residues 107-110 (CLCC) carry the CXCC motif motif. Residues 110 to 114 (CSVKD) and 203 to 206 (NKTD) contribute to the GTP site. The 104-residue stretch at 274–377 (IVTITFEVPG…ILKQLFIATV (104 aa)) folds into the CobW C-terminal domain.

The protein belongs to the SIMIBI class G3E GTPase family. ZNG1 subfamily.

The protein resides in the nucleus. It carries out the reaction GTP + H2O = GDP + phosphate + H(+). Its function is as follows. Zinc chaperone that directly transfers zinc cofactor to target metalloproteins, thereby activating them. Catalyzes zinc insertion into the active site of methionine aminopeptidase METAP1, which function to cleave the initiator methionine from polypeptides during or after protein translation. Mechanistically, the N-terminal psi-PxLVp motif binds to the C6H2-type zinc finger of inactive form of METAP1. After formation of the docked complex, zinc is transferred from the CXCC motif in the GTPase domain of ZNG1B to the zinc binding site in the peptidase domain of METAP1 in a process requiring GTP hydrolysis. GTP/GDP exchange is required for release of active METAP1. This is Zinc-regulated GTPase metalloprotein activator 1B from Homo sapiens (Human).